We begin with the raw amino-acid sequence, 263 residues long: Glucosamine-6-phosphate deaminase (263 aa).

D67 serves as the catalytic Proton acceptor; for enolization step. N136 serves as the catalytic For ring-opening step. The active-site Proton acceptor; for ring-opening step is H138. The For ring-opening step role is filled by E143.

Belongs to the glucosamine/galactosamine-6-phosphate isomerase family. NagB subfamily. As to quaternary structure, homohexamer.

It catalyses the reaction alpha-D-glucosamine 6-phosphate + H2O = beta-D-fructose 6-phosphate + NH4(+). Its pathway is amino-sugar metabolism; N-acetylneuraminate degradation; D-fructose 6-phosphate from N-acetylneuraminate: step 5/5. Functionally, catalyzes the reversible isomerization-deamination of glucosamine 6-phosphate (GlcN6P) to form fructose 6-phosphate (Fru6P) and ammonium ion. The chain is Glucosamine-6-phosphate deaminase from Cellvibrio japonicus (strain Ueda107) (Pseudomonas fluorescens subsp. cellulosa).